A 1079-amino-acid chain; its full sequence is Electrogenic sodium bicarbonate cotransporter 1 (1079 aa).

Positions 1 to 62 (MEDEAVLDRG…EKKEKERISE (62 aa)) are required for interaction with AHCYL1. Over 1–466 (MEDEAVLDRG…FASDFYDALN (466 aa)) the chain is Cytoplasmic. Glutamate 2 carries the post-translational modification Phosphoserine. Tyrosine 30 carries the post-translational modification Phosphotyrosine. Basic residues predominate over residues 39 to 52 (YRRRRRHKRKAGHK). The interval 39 to 78 (YRRRRRHKRKAGHKEKKEKERISENYSDKSDVENADESSS) is disordered. The segment covering 53–70 (EKKEKERISENYSDKSDV) has biased composition (basic and acidic residues). Serine 61, serine 65, serine 68, serine 223, serine 232, serine 233, and serine 245 each carry phosphoserine. A disordered region spans residues 235–266 (SRMFSNPDNGSPAMTHRNLTSSSLNDISDKPE). Threonine 249 and threonine 254 each carry phosphothreonine. Residues 251–260 (RNLTSSSLND) are compositionally biased toward polar residues. Serine 256, serine 257, and serine 262 each carry phosphoserine. Residues 467–491 (IQALSAILFIYLATVTNAITFGGLL) form a helical membrane-spanning segment. The Extracellular portion of the chain corresponds to 492-501 (GDATDNMQGV). The chain crosses the membrane as a helical span at residues 502 to 520 (LESFLGTAVSGAIFCLFAG). A topological domain (cytoplasmic) is located at residue glutamine 521. Residues 522–542 (PLTILSSTGPVLVFERLLFNF) traverse the membrane as a discontinuously helical segment. Residues 543-550 (SKDHSFDY) are Extracellular-facing. Residues 551–571 (LEFRLWIGLWSAFMCLILVAT) form a helical membrane-spanning segment. The Cytoplasmic segment spans residues 572-585 (DASFLVQYFTRFTE). A helical transmembrane segment spans residues 586–609 (EGFSSLISFIFIYDAFKKMIKLAD). Residues isoleucine 597 and phenylalanine 617 are each glycosylated (N-linked (GlcNAc) asparagine). The Extracellular segment spans residues 610 to 692 (YYPINSDFRV…GNNCDFVPDI (83 aa)). A helical transmembrane segment spans residues 693–710 (TLMSFILFLGTYTSSMAM). Residues 711–725 (KKFKTSRYFPTTARK) lie on the Cytoplasmic side of the membrane. Residues 726-745 (LISDFAIILSILIFCVIDAL) traverse the membrane as a helical segment. Residues 746 to 779 (VGVDTPKLIVPSEFKPTSPHRGWFVPPFGGNPWW) are Extracellular-facing. Residues 748–779 (VDTPKLIVPSEFKPTSPHRGWFVPPFGGNPWW) form an interaction with CA4 region. Residues 780 to 807 (VCLAAAIPALLVTILIFMDQQITAVIVN) traverse the membrane as a helical segment. The Cytoplasmic portion of the chain corresponds to 808-819 (RKEHKLKKGAGY). Residues 820–836 (HLDLFWVAILMVVCSFM) form a helical membrane-spanning segment. Residue alanine 837 is a topological domain, extracellular. Residues 838-855 (LPWYVAATVISIAHIDSL) traverse the membrane as a discontinuously helical segment. The Cytoplasmic portion of the chain corresponds to 856 to 877 (KMETETSAPGEQPKFLGVREQR). A helical transmembrane segment spans residues 878-894 (VTGTLVFILTGLSVFMA). The Extracellular segment spans residues 895-901 (PILKFIP). The chain crosses the membrane as a helical span at residues 902–918 (MPVLYGVFLYMGVASLN). The Cytoplasmic portion of the chain corresponds to 919–960 (GVQFMDRLKLLLMPLKHQPDFIYLRHVPLRRVHLFTSLQVLC). The segment at residues 961–986 (LALLWILKSTVAAIIFPVMILALVAV) is an intramembrane region (discontinuously helical). The Cytoplasmic portion of the chain corresponds to 987–1079 (RKGMDYLFSQ…STFLERHTSC (93 aa)). The tract at residues 1002–1004 (LDD) is CA2-binding. The tract at residues 1012–1079 (KKKEDEKKKK…STFLERHTSC (68 aa)) is disordered. Serine 1026 and serine 1029 each carry phosphoserine. Phosphoserine; by PKA is present on serine 1026. The segment at 1030–1033 (DNDD) is CA2-binding. Phosphoserine is present on residues serine 1034 and serine 1044. The required for basolateral targeting stretch occupies residues 1057-1059 (FLS). Aspartate 1060, leucine 1064, serine 1069, and serine 1078 each carry phosphoserine. A compositionally biased stretch (basic and acidic residues) spans 1062–1079 (KPLDRERSSTFLERHTSC).

The protein belongs to the anion exchanger (TC 2.A.31) family. Homodimer. Interacts with CA2/carbonic anhydrase 2 and CA4/carbonic anhydrase 4 which may regulate transporter activity. Isoform 1 but not isoform 2 interacts with AHCYL1 (via PEST domain when phosphorylated); the interaction increases SLC4A4 isoform 1 activity. Interacts with AHCYL2. In terms of processing, phosphorylation of Ser-1026 by PKA increases the binding of CA2 and changes the Na(+):HCO3(-) stoichiometry of the transporter from 3:1 to 2:1. Phosphorylated in presence of STK39 and dephosphorylated in presence of PP1 phosphatase; phosphorylation seems to inhibit SLC4A4 activity. N-glycosylation is not necessary for the transporter basic functions. In terms of tissue distribution, specifically expressed in kidney and to a lower extent in liver, lung, spleen, brain, skeletal muscle and heart. In kidney, expressed in proximal tubules at the corticomedullary junction. Isoform 2 is specifically expressed in kidney. Isoform 1 is expressed in kidney and pancreas while isoform 3 is specifically expressed in brain (at protein level). In brain, isoform 1 is expressed in astrocytes while isoform 3 is expressed in neurons (at protein level). In the eye, isoform 1 is expressed in cornea, conjunctiva, lens epithelium, ciliary bodies and retina while isoform 2 is detected only in the conjunctiva.

It is found in the basolateral cell membrane. Its subcellular location is the cell membrane. The catalysed reaction is 2 hydrogencarbonate(out) + Na(+)(out) = 2 hydrogencarbonate(in) + Na(+)(in). The enzyme catalyses 3 hydrogencarbonate(out) + Na(+)(out) = 3 hydrogencarbonate(in) + Na(+)(in). With respect to regulation, inhibited by 4,4'-diisothiocyanatostilbene-2,2'-disulfonic acid (DIDS). In terms of biological role, electrogenic sodium/bicarbonate cotransporter with a Na(+):HCO3(-) stoichiometry varying from 1:2 to 1:3. May regulate bicarbonate influx/efflux at the basolateral membrane of cells and regulate intracellular pH. The sequence is that of Electrogenic sodium bicarbonate cotransporter 1 (Slc4a4) from Rattus norvegicus (Rat).